Consider the following 427-residue polypeptide: Light-independent protochlorophyllide reductase subunit N (427 aa).

The [4Fe-4S] cluster site is built by Cys-30, Cys-55, and Cys-116.

This sequence belongs to the BchN/ChlN family. As to quaternary structure, protochlorophyllide reductase is composed of three subunits; BchL, BchN and BchB. Forms a heterotetramer of two BchB and two BchN subunits. Requires [4Fe-4S] cluster as cofactor.

The enzyme catalyses chlorophyllide a + oxidized 2[4Fe-4S]-[ferredoxin] + 2 ADP + 2 phosphate = protochlorophyllide a + reduced 2[4Fe-4S]-[ferredoxin] + 2 ATP + 2 H2O. It functions in the pathway porphyrin-containing compound metabolism; bacteriochlorophyll biosynthesis (light-independent). Its function is as follows. Component of the dark-operative protochlorophyllide reductase (DPOR) that uses Mg-ATP and reduced ferredoxin to reduce ring D of protochlorophyllide (Pchlide) to form chlorophyllide a (Chlide). This reaction is light-independent. The NB-protein (BchN-BchB) is the catalytic component of the complex. This is Light-independent protochlorophyllide reductase subunit N from Rhodopseudomonas palustris (strain BisA53).